We begin with the raw amino-acid sequence, 91 residues long: MTSTFFKYSVLLLPALINLAAFLTNFQTNTLPVEPINLYLSNFVHSDFYHLTGNIVVYIVSAFLSFIFFRNSDMKGFSGYLLPSYSFLYHI.

2 helical membrane-spanning segments follow: residues 5 to 27 (FFKY…TNFQ) and 47 to 69 (DFYH…FIFF).

The protein localises to the cell membrane. This is an uncharacterized protein from Archaeoglobus fulgidus (strain ATCC 49558 / DSM 4304 / JCM 9628 / NBRC 100126 / VC-16).